A 421-amino-acid chain; its full sequence is 4-hydroxy-3-methylbut-2-en-1-yl diphosphate synthase (flavodoxin) (421 aa).

The [4Fe-4S] cluster site is built by C311, C314, C357, and E364.

It belongs to the IspG family. The cofactor is [4Fe-4S] cluster.

The catalysed reaction is (2E)-4-hydroxy-3-methylbut-2-enyl diphosphate + oxidized [flavodoxin] + H2O + 2 H(+) = 2-C-methyl-D-erythritol 2,4-cyclic diphosphate + reduced [flavodoxin]. The protein operates within isoprenoid biosynthesis; isopentenyl diphosphate biosynthesis via DXP pathway; isopentenyl diphosphate from 1-deoxy-D-xylulose 5-phosphate: step 5/6. In terms of biological role, converts 2C-methyl-D-erythritol 2,4-cyclodiphosphate (ME-2,4cPP) into 1-hydroxy-2-methyl-2-(E)-butenyl 4-diphosphate. The chain is 4-hydroxy-3-methylbut-2-en-1-yl diphosphate synthase (flavodoxin) from Xanthomonas oryzae pv. oryzae (strain KACC10331 / KXO85).